We begin with the raw amino-acid sequence, 181 residues long: Anthrone oxygenase encC (181 aa).

A run of 4 helical transmembrane segments spans residues 1-21 (MASV…WLSG), 65-81 (QIAA…AWCA), 88-108 (LLYG…LLFM), and 153-173 (FLAG…LFAA).

It belongs to the anthrone oxygenase family. Endocrocin is specifically produced in conidia.

It localises to the membrane. In terms of biological role, anthrone oxygenase; part of the gene cluster that mediates the biosynthesis of endocrocin, a simple anthraquinone interesting for many biotechnological applications. The pathway begins with the synthesis of atrochrysone thioester by the polyketide synthase (PKS) encA. The atrochrysone carboxyl ACP thioesterase encB then breaks the thioester bond and releases the atrochrysone carboxylic acid from encA. The atrochrysone carboxylic acid is then converted to endocrocin anthrone which is further oxidized into endocrocin by the anthrone oxygenase encC. The exact function of encD has not been identified yet, but it negatively regulates endocrocin production, likely through the modification of endocrocin itself. This chain is Anthrone oxygenase encC, found in Aspergillus fumigatus (strain ATCC MYA-4609 / CBS 101355 / FGSC A1100 / Af293) (Neosartorya fumigata).